We begin with the raw amino-acid sequence, 130 residues long: Methylglyoxal synthase (130 aa).

The MGS-like domain occupies 1-130 (MSKPRIALIA…DLARNMQDVC (130 aa)). Residues His11, Lys15, 37-40 (TGTT), and 57-58 (SG) contribute to the substrate site. Residue Asp63 is the Proton donor/acceptor of the active site. Position 90 (His90) interacts with substrate.

Belongs to the methylglyoxal synthase family.

It catalyses the reaction dihydroxyacetone phosphate = methylglyoxal + phosphate. Functionally, catalyzes the formation of methylglyoxal from dihydroxyacetone phosphate. This Burkholderia vietnamiensis (strain G4 / LMG 22486) (Burkholderia cepacia (strain R1808)) protein is Methylglyoxal synthase.